The sequence spans 318 residues: MKKFTCVQDIGDLKSALAESFEIKKDRFKYVELGRNKTLLMIFFNSSLRTRLSTQKAALNLGMNVIVLDINQGAWKLETERGVIMDGDKPEHLLEAIPVMGCYCDIIGVRSFARFENREYDYNEVIINQFIQHSGRPVFSMEAATRHPLQSFADLITIEEYKKTARPKVVMTWAPHPRPLPQAVPNSFAEWMNATDYEFVITHPEGYELDPKFVGNARVEYDQMKAFEGADFIYAKNWAAYTGDNYGQILSTDRNWTVGDRQMAVTNNAYFMHCLPVRRNMIVTDDVIESPQSIVIPEAANREISATVVLKRLLENLP.

Carbamoyl phosphate-binding positions include 47–50, W75, and R110; that span reads SLRT. E142 contributes to the N(2)-succinyl-L-ornithine binding site. 147 to 150 serves as a coordination point for carbamoyl phosphate; sequence HPLQ. Positions 176 and 236 each coordinate N(2)-succinyl-L-ornithine. 274–275 contributes to the carbamoyl phosphate binding site; sequence CL. R278 serves as a coordination point for N(2)-succinyl-L-ornithine. Position 302 (R302) interacts with carbamoyl phosphate.

Belongs to the aspartate/ornithine carbamoyltransferase superfamily. SOTCase family. As to quaternary structure, homotrimer.

The catalysed reaction is N(2)-succinyl-L-ornithine + carbamoyl phosphate = N(2)-succinyl-L-citrulline + phosphate + H(+). It participates in amino-acid biosynthesis; L-arginine biosynthesis. Functionally, catalyzes the transfer of the carbamoyl group from carbamoyl phosphate to the delta-amino group of N(2)-succinyl-L-ornithine to produce N(2)-succinyl-L-citrulline. Is essential for arginine biosynthesis. Has no activity with either L-ornithine or L-aspartate as substrate. Also has no detectable AOTCase activity, being unable to convert N(2)-acetyl-L-ornithine to N(2)-acetyl-L-citrulline. This is N-succinylornithine carbamoyltransferase from Bacteroides fragilis (strain 638R).